The following is a 161-amino-acid chain: Sec-independent protein translocase protein TatB (161 aa).

The helical transmembrane segment at 2–22 threads the bilayer; that stretch reads FNDIGALELVTLVVLAVLVFG. Residues 102 to 161 form a disordered region; it reads DAVHGRDAESSSSGSSSGSSSAASGNGRVDMSKKPEKPEKPGKTDKPAADDRPPFDMDAT. Residues 111–126 show a composition bias toward low complexity; that stretch reads SSSSGSSSGSSSAASG. Over residues 131–161 the composition is skewed to basic and acidic residues; that stretch reads DMSKKPEKPEKPGKTDKPAADDRPPFDMDAT.

The protein belongs to the TatB family. As to quaternary structure, the Tat system comprises two distinct complexes: a TatABC complex, containing multiple copies of TatA, TatB and TatC subunits, and a separate TatA complex, containing only TatA subunits. Substrates initially bind to the TatABC complex, which probably triggers association of the separate TatA complex to form the active translocon.

It localises to the cell membrane. Functionally, part of the twin-arginine translocation (Tat) system that transports large folded proteins containing a characteristic twin-arginine motif in their signal peptide across membranes. Together with TatC, TatB is part of a receptor directly interacting with Tat signal peptides. TatB may form an oligomeric binding site that transiently accommodates folded Tat precursor proteins before their translocation. The chain is Sec-independent protein translocase protein TatB from Streptomyces coelicolor (strain ATCC BAA-471 / A3(2) / M145).